The following is a 293-amino-acid chain: Ribonuclease H2 subunit B (293 aa).

Residues 251 to 278 (KRPQNSDITSSLLKKPNRKQATKKSKYF) are disordered. The span at 265–276 (KPNRKQATKKSK) shows a compositional bias: basic residues.

This sequence belongs to the RNase H2 subunit B family. As to quaternary structure, component of the RNase H2 complex.

Its subcellular location is the nucleus. The protein localises to the cytoplasm. Non catalytic subunit of RNase H2, an endonuclease that specifically degrades the RNA of RNA:DNA hybrids. Participates in DNA replication, possibly by mediating the removal of lagging-strand Okazaki fragment RNA primers during DNA replication. Mediates the excision of single ribonucleotides from DNA:RNA duplexes. The chain is Ribonuclease H2 subunit B (rnh202) from Schizosaccharomyces pombe (strain 972 / ATCC 24843) (Fission yeast).